We begin with the raw amino-acid sequence, 224 residues long: N-(5'-phosphoribosyl)anthranilate isomerase (224 aa).

Belongs to the TrpF family.

It catalyses the reaction N-(5-phospho-beta-D-ribosyl)anthranilate = 1-(2-carboxyphenylamino)-1-deoxy-D-ribulose 5-phosphate. It functions in the pathway amino-acid biosynthesis; L-tryptophan biosynthesis; L-tryptophan from chorismate: step 3/5. The chain is N-(5'-phosphoribosyl)anthranilate isomerase (TRP1) from Saccharomyces cerevisiae (strain ATCC 204508 / S288c) (Baker's yeast).